We begin with the raw amino-acid sequence, 869 residues long: Iron-sulfur cluster assembly SufBD family protein ML0593 (869 aa).

A DOD-type homing endonuclease domain is found at 344-477; it reads LLGLWLGDGH…VRQLAIGCGL (134 aa).

Belongs to the iron-sulfur cluster assembly SufBD family. In terms of processing, this protein undergoes a protein self splicing that involves a post-translational excision of the intervening region (intein) followed by peptide ligation.

The chain is Iron-sulfur cluster assembly SufBD family protein ML0593 from Mycobacterium leprae (strain TN).